We begin with the raw amino-acid sequence, 299 residues long: ATP phosphoribosyltransferase (299 aa).

The protein belongs to the ATP phosphoribosyltransferase family. Long subfamily. Mg(2+) serves as cofactor.

It localises to the cytoplasm. The catalysed reaction is 1-(5-phospho-beta-D-ribosyl)-ATP + diphosphate = 5-phospho-alpha-D-ribose 1-diphosphate + ATP. The protein operates within amino-acid biosynthesis; L-histidine biosynthesis; L-histidine from 5-phospho-alpha-D-ribose 1-diphosphate: step 1/9. Feedback inhibited by histidine. Catalyzes the condensation of ATP and 5-phosphoribose 1-diphosphate to form N'-(5'-phosphoribosyl)-ATP (PR-ATP). Has a crucial role in the pathway because the rate of histidine biosynthesis seems to be controlled primarily by regulation of HisG enzymatic activity. The sequence is that of ATP phosphoribosyltransferase from Actinobacillus pleuropneumoniae serotype 7 (strain AP76).